A 220-amino-acid chain; its full sequence is NADH-quinone oxidoreductase subunit I (220 aa).

4Fe-4S ferredoxin-type domains follow at residues 71-102 (LQRL…IITH) and 112-141 (DSYT…MGNR). [4Fe-4S] cluster-binding residues include Cys-82, Cys-85, Cys-88, Cys-92, Cys-121, Cys-124, Cys-127, and Cys-131. The disordered stretch occupies residues 189-220 (ATPLDYVQEPSKEESKKETPTSPEANKGDENV). The span at 198 to 207 (PSKEESKKET) shows a compositional bias: basic and acidic residues.

This sequence belongs to the complex I 23 kDa subunit family. NDH-1 is composed of 14 different subunits. Subunits NuoA, H, J, K, L, M, N constitute the membrane sector of the complex. The cofactor is [4Fe-4S] cluster.

Its subcellular location is the cell inner membrane. It catalyses the reaction a quinone + NADH + 5 H(+)(in) = a quinol + NAD(+) + 4 H(+)(out). NDH-1 shuttles electrons from NADH, via FMN and iron-sulfur (Fe-S) centers, to quinones in the respiratory chain. The immediate electron acceptor for the enzyme in this species is believed to be ubiquinone. Couples the redox reaction to proton translocation (for every two electrons transferred, four hydrogen ions are translocated across the cytoplasmic membrane), and thus conserves the redox energy in a proton gradient. The chain is NADH-quinone oxidoreductase subunit I from Helicobacter acinonychis (strain Sheeba).